We begin with the raw amino-acid sequence, 872 residues long: Leucine--tRNA ligase (872 aa).

Residues 56–66 (PYPSGNLHMGH) carry the 'HIGH' region motif. Positions 629–633 (KMSKS) match the 'KMSKS' region motif. Lys632 contributes to the ATP binding site.

It belongs to the class-I aminoacyl-tRNA synthetase family.

It localises to the cytoplasm. It catalyses the reaction tRNA(Leu) + L-leucine + ATP = L-leucyl-tRNA(Leu) + AMP + diphosphate. The sequence is that of Leucine--tRNA ligase from Prochlorococcus marinus (strain MIT 9211).